The following is a 283-amino-acid chain: Probable endonuclease 4 (283 aa).

9 residues coordinate Zn(2+): histidine 69, histidine 113, glutamate 148, aspartate 182, histidine 185, histidine 217, aspartate 230, histidine 232, and glutamate 262.

Belongs to the AP endonuclease 2 family. The cofactor is Zn(2+).

The catalysed reaction is Endonucleolytic cleavage to 5'-phosphooligonucleotide end-products.. Functionally, endonuclease IV plays a role in DNA repair. It cleaves phosphodiester bonds at apurinic or apyrimidinic (AP) sites, generating a 3'-hydroxyl group and a 5'-terminal sugar phosphate. This is Probable endonuclease 4 from Bifidobacterium longum (strain NCC 2705).